The sequence spans 616 residues: Chaperone protein HscA (616 aa).

The protein belongs to the heat shock protein 70 family.

Functionally, chaperone involved in the maturation of iron-sulfur cluster-containing proteins. Has a low intrinsic ATPase activity which is markedly stimulated by HscB. Involved in the maturation of IscU. The protein is Chaperone protein HscA of Proteus mirabilis (strain HI4320).